We begin with the raw amino-acid sequence, 233 residues long: tRNA (guanine-N(1)-)-methyltransferase (233 aa).

S-adenosyl-L-methionine-binding positions include Gly-110 and 130–135; that span reads IGDYVM.

It belongs to the RNA methyltransferase TrmD family. In terms of assembly, homodimer.

Its subcellular location is the cytoplasm. The enzyme catalyses guanosine(37) in tRNA + S-adenosyl-L-methionine = N(1)-methylguanosine(37) in tRNA + S-adenosyl-L-homocysteine + H(+). In terms of biological role, specifically methylates guanosine-37 in various tRNAs. The polypeptide is tRNA (guanine-N(1)-)-methyltransferase (Finegoldia magna (strain ATCC 29328 / DSM 20472 / WAL 2508) (Peptostreptococcus magnus)).